The following is a 286-amino-acid chain: Small ribosomal subunit protein uS3 (286 aa).

A KH type-2 domain is found at 39-107 (VREYLKKKLA…PVHVNIEEIR (69 aa)). The interval 213–286 (QAGAGTAAPQ…KPGVNDAAAS (74 aa)) is disordered. The segment covering 241 to 262 (GRADARSDGKAGEKKGPRKSDN) has biased composition (basic and acidic residues).

The protein belongs to the universal ribosomal protein uS3 family. As to quaternary structure, part of the 30S ribosomal subunit. Forms a tight complex with proteins S10 and S14.

In terms of biological role, binds the lower part of the 30S subunit head. Binds mRNA in the 70S ribosome, positioning it for translation. The chain is Small ribosomal subunit protein uS3 from Nitrosospira multiformis (strain ATCC 25196 / NCIMB 11849 / C 71).